Here is a 387-residue protein sequence, read N- to C-terminus: Natterin-4 (387 aa).

Residues 1–18 form the signal peptide; the sequence is MKLLVLLVTLLVLSWTSA. The propeptide occupies 19–46; it reads EDVGDQEILQQHNEDNNHKSELGEAAPQ. Over residues 31-40 the composition is skewed to basic and acidic residues; sequence NEDNNHKSEL. Positions 31–57 are disordered; the sequence is NEDNNHKSELGEAAPQRTDNETSQLGQ.

It belongs to the natterin family. Contains 4 disulfide bonds. Expressed by the venom gland.

The protein localises to the secreted. Inhibited by tissue-kallikrein inhibitor TKI and trasylol. Plasma kallikrein inhibitor PKSI527 and classical inhibitors of serine-, metallo-, thiol- or aspartate-peptidases evokes a minor inhibition of the peptide digestion. Its function is as follows. Shows nociceptive, edema-inducing and kininogenase activity with release of kallidin from low molecular weight kininogen. The cleavage occurs at Met-Lys bonds. The chain is Natterin-4 from Thalassophryne nattereri (Copper Joe toadfish).